The primary structure comprises 330 residues: Pyridoxal 5'-phosphate synthase subunit PdxS (330 aa).

Asp-23 contacts D-ribose 5-phosphate. The active-site Schiff-base intermediate with D-ribose 5-phosphate is Lys-80. Gly-152 contacts D-ribose 5-phosphate. Arg-164 serves as a coordination point for D-glyceraldehyde 3-phosphate. Residues Gly-250 and 271–272 (GS) contribute to the D-ribose 5-phosphate site.

It belongs to the PdxS/SNZ family. In terms of assembly, in the presence of PdxT, forms a dodecamer of heterodimers.

The catalysed reaction is aldehydo-D-ribose 5-phosphate + D-glyceraldehyde 3-phosphate + L-glutamine = pyridoxal 5'-phosphate + L-glutamate + phosphate + 3 H2O + H(+). The protein operates within cofactor biosynthesis; pyridoxal 5'-phosphate biosynthesis. Its function is as follows. Catalyzes the formation of pyridoxal 5'-phosphate from ribose 5-phosphate (RBP), glyceraldehyde 3-phosphate (G3P) and ammonia. The ammonia is provided by the PdxT subunit. Can also use ribulose 5-phosphate and dihydroxyacetone phosphate as substrates, resulting from enzyme-catalyzed isomerization of RBP and G3P, respectively. The polypeptide is Pyridoxal 5'-phosphate synthase subunit PdxS (Methanocaldococcus jannaschii (strain ATCC 43067 / DSM 2661 / JAL-1 / JCM 10045 / NBRC 100440) (Methanococcus jannaschii)).